The primary structure comprises 357 residues: Geranylgeranyl pyrophosphate synthase 11, chloroplastic (357 aa).

The transit peptide at 1–37 (MATTLSSSSLFIQFRGRRYNSLSSFNNLQKRTVLSLS) directs the protein to the chloroplast. 3 residues coordinate isopentenyl diphosphate: Lys103, Arg106, and His135. Asp142 and Asp148 together coordinate Mg(2+). A dimethylallyl diphosphate-binding site is contributed by Arg153. Arg154 is a binding site for isopentenyl diphosphate. Dimethylallyl diphosphate-binding residues include Lys242, Thr243, Gln280, Lys297, and Lys307.

This sequence belongs to the FPP/GGPP synthase family. In terms of assembly, monomer. It depends on Mg(2+) as a cofactor.

The protein resides in the plastid. Its subcellular location is the chloroplast. It catalyses the reaction isopentenyl diphosphate + dimethylallyl diphosphate = (2E)-geranyl diphosphate + diphosphate. It carries out the reaction isopentenyl diphosphate + (2E)-geranyl diphosphate = (2E,6E)-farnesyl diphosphate + diphosphate. The enzyme catalyses isopentenyl diphosphate + (2E,6E)-farnesyl diphosphate = (2E,6E,10E)-geranylgeranyl diphosphate + diphosphate. It functions in the pathway isoprenoid biosynthesis; farnesyl diphosphate biosynthesis; farnesyl diphosphate from geranyl diphosphate and isopentenyl diphosphate: step 1/1. The protein operates within isoprenoid biosynthesis; geranyl diphosphate biosynthesis; geranyl diphosphate from dimethylallyl diphosphate and isopentenyl diphosphate: step 1/1. Its pathway is isoprenoid biosynthesis; geranylgeranyl diphosphate biosynthesis; geranylgeranyl diphosphate from farnesyl diphosphate and isopentenyl diphosphate: step 1/1. Functionally, catalyzes the trans-addition of the three molecules of IPP onto DMAPP to form geranylgeranyl pyrophosphate. This chain is Geranylgeranyl pyrophosphate synthase 11, chloroplastic, found in Arabidopsis thaliana (Mouse-ear cress).